The sequence spans 347 residues: Protein RecA (347 aa).

67–74 (GPESSGKT) provides a ligand contact to ATP. A disordered region spans residues 326–347 (DKLLPGRAPSSEAQGTESGQEA). Positions 336–347 (SEAQGTESGQEA) are enriched in polar residues.

It belongs to the RecA family.

It localises to the cytoplasm. Its function is as follows. Can catalyze the hydrolysis of ATP in the presence of single-stranded DNA, the ATP-dependent uptake of single-stranded DNA by duplex DNA, and the ATP-dependent hybridization of homologous single-stranded DNAs. It interacts with LexA causing its activation and leading to its autocatalytic cleavage. In Alkalilimnicola ehrlichii (strain ATCC BAA-1101 / DSM 17681 / MLHE-1), this protein is Protein RecA.